A 166-amino-acid polypeptide reads, in one-letter code: Signal peptidase complex catalytic subunit SEC11 (166 aa).

Over 1 to 9 the chain is Cytoplasmic; that stretch reads MNIRQQLTQ. A helical; Signal-anchor for type II membrane protein transmembrane segment spans residues 10-30; sequence LLTLGYVFASAFMLWKTLSVV. The Lumenal segment spans residues 31–166; it reads ANLHSPIVVV…LGLSSLFSNE (136 aa). Catalysis depends on charge relay system residues S44, H83, and D108. The interval 152–163 is C-terminal short (CTS) helix; sequence GLLGLLGLSSLF.

Belongs to the peptidase S26B family. As to quaternary structure, component of the signal peptidase complex (SPC) composed of a catalytic subunit SEC11 and three accessory subunits SPC1, SPC2 and SPC3. The complex induces a local thinning of the ER membrane which is used to measure the length of the signal peptide (SP) h-region of protein substrates. This ensures the selectivity of the complex towards h-regions shorter than 18-20 amino acids. SPC associates with the translocon complex.

The protein resides in the endoplasmic reticulum membrane. It carries out the reaction Cleavage of hydrophobic, N-terminal signal or leader sequences from secreted and periplasmic proteins.. In terms of biological role, catalytic component of the signal peptidase complex (SPC) which catalyzes the cleavage of N-terminal signal sequences from nascent proteins as they are translocated into the lumen of the endoplasmic reticulum. Specifically cleaves N-terminal signal peptides that contain a hydrophobic alpha-helix (h-region) shorter than 18-20 amino acids. The chain is Signal peptidase complex catalytic subunit SEC11 (SEC11) from Lodderomyces elongisporus (strain ATCC 11503 / CBS 2605 / JCM 1781 / NBRC 1676 / NRRL YB-4239) (Yeast).